We begin with the raw amino-acid sequence, 765 residues long: Single-minded homolog 1 (765 aa).

A bHLH domain is found at 1 to 53 (MKEKSKNAARTRREKENSEFYELAKLLPLPSAITSQLDKASIIRLTTSYLKMR). 2 PAS domains span residues 77–147 (GREL…QPYH) and 218–288 (PPSA…LVKG). Positions 292-335 (TKYYRFLAKQGGWVWVQSYATIVHNSRSSRPHCIVSVNYVLTDT) constitute a PAC domain. The Single-minded C-terminal domain occupies 336-765 (EYKGLQLSLD…GTSVIITNGS (430 aa)). Low complexity-rich tracts occupy residues 352–365 (PTFSYTSSSTPTIS) and 373–385 (SRLSSSKSKSRTS). Disordered stretches follow at residues 352–428 (PTFS…PGSQ) and 527–560 (WDEDSVVSSPDPGSASESGDRYRTEQYQNSPHEP). The Nuclear localization signal motif lies at 368 to 387 (RKGAKSRLSSSKSKSRTSPY). Residues 394–404 (HTERSESDHDS) are compositionally biased toward basic and acidic residues.

Efficient DNA binding requires dimerization with another bHLH protein. Heterodimer; forms a heterodimer with ARNT, ARNT2. Detected in lung, skeletal muscle and kidney. During fetal development it is found in the CNS, developing kidney, mesodermal and endodermal tissues, including developing somites, mesonephric duct, and foregut.

It localises to the nucleus. In terms of biological role, transcriptional factor that may have pleiotropic effects during embryogenesis and in the adult. In Mus musculus (Mouse), this protein is Single-minded homolog 1 (Sim1).